Consider the following 34-residue polypeptide: uncharacterized protein (34 aa).

This is an uncharacterized protein from Acidianus two-tailed virus (ATV).